A 612-amino-acid polypeptide reads, in one-letter code: uncharacterized protein (612 aa).

Residues 39–100 adopt a coiled-coil conformation; that stretch reads ERDHNLWEIE…KNISVKDLDE (62 aa). The interval 219–241 is disordered; the sequence is PLSSGESLPKKEEEVTKSPSFTL. WD repeat units lie at residues 286-325, 337-376, 389-432, 434-470, 483-523, 526-565, and 574-612; these read TSTQ…NDNS, GHEG…TSDS, GHED…FKIR, DSKQ…LVSQ, AVKD…LLAE, ISKV…STLE, and EEIT…KYLP.

The protein localises to the cytoplasm. This is an uncharacterized protein from Schizosaccharomyces pombe (strain 972 / ATCC 24843) (Fission yeast).